Reading from the N-terminus, the 629-residue chain is Dihydroxy-acid dehydratase 2 (629 aa).

Residue Asp-82 participates in Mg(2+) binding. A [2Fe-2S] cluster-binding site is contributed by Cys-123. Positions 124 and 125 each coordinate Mg(2+). Lys-125 is modified (N6-carboxylysine). Cys-197 contacts [2Fe-2S] cluster. Mg(2+) is bound at residue Glu-493. Ser-519 acts as the Proton acceptor in catalysis. The disordered stretch occupies residues 603–629; it reads DKGGVRRLPPDELGGPEAAFDTQTRAG.

This sequence belongs to the IlvD/Edd family. Homodimer. [2Fe-2S] cluster is required as a cofactor. The cofactor is Mg(2+).

The enzyme catalyses (2R)-2,3-dihydroxy-3-methylbutanoate = 3-methyl-2-oxobutanoate + H2O. It catalyses the reaction (2R,3R)-2,3-dihydroxy-3-methylpentanoate = (S)-3-methyl-2-oxopentanoate + H2O. It functions in the pathway amino-acid biosynthesis; L-isoleucine biosynthesis; L-isoleucine from 2-oxobutanoate: step 3/4. The protein operates within amino-acid biosynthesis; L-valine biosynthesis; L-valine from pyruvate: step 3/4. Its function is as follows. Functions in the biosynthesis of branched-chain amino acids. Catalyzes the dehydration of (2R,3R)-2,3-dihydroxy-3-methylpentanoate (2,3-dihydroxy-3-methylvalerate) into 2-oxo-3-methylpentanoate (2-oxo-3-methylvalerate) and of (2R)-2,3-dihydroxy-3-methylbutanoate (2,3-dihydroxyisovalerate) into 2-oxo-3-methylbutanoate (2-oxoisovalerate), the penultimate precursor to L-isoleucine and L-valine, respectively. The sequence is that of Dihydroxy-acid dehydratase 2 from Nocardia farcinica (strain IFM 10152).